Here is a 420-residue protein sequence, read N- to C-terminus: 3-phosphoshikimate 1-carboxyvinyltransferase (420 aa).

3-phosphoshikimate contacts are provided by Lys26, Ser27, and Arg31. Position 26 (Lys26) interacts with phosphoenolpyruvate. Residues Gly97 and Arg125 each coordinate phosphoenolpyruvate. 3-phosphoshikimate contacts are provided by Ser170, Ser171, Gln172, Asp297, Asn320, and Lys324. Gln172 is a phosphoenolpyruvate binding site. Asp297 acts as the Proton acceptor in catalysis. Arg328, Arg375, and Lys400 together coordinate phosphoenolpyruvate.

This sequence belongs to the EPSP synthase family. As to quaternary structure, monomer.

Its subcellular location is the cytoplasm. It carries out the reaction 3-phosphoshikimate + phosphoenolpyruvate = 5-O-(1-carboxyvinyl)-3-phosphoshikimate + phosphate. It participates in metabolic intermediate biosynthesis; chorismate biosynthesis; chorismate from D-erythrose 4-phosphate and phosphoenolpyruvate: step 6/7. In terms of biological role, catalyzes the transfer of the enolpyruvyl moiety of phosphoenolpyruvate (PEP) to the 5-hydroxyl of shikimate-3-phosphate (S3P) to produce enolpyruvyl shikimate-3-phosphate and inorganic phosphate. In Rhizobium leguminosarum bv. trifolii (strain WSM2304), this protein is 3-phosphoshikimate 1-carboxyvinyltransferase.